The following is a 715-amino-acid chain: Fatty acid oxidation complex subunit alpha (715 aa).

The enoyl-CoA hydratase stretch occupies residues 1-190 (MTTTSAFMLN…KAGLVDDVVP (190 aa)). The tract at residues 306–715 (GPLNSVGILG…WTNGETDQGN (410 aa)) is 3-hydroxyacyl-CoA dehydrogenase.

This sequence in the N-terminal section; belongs to the enoyl-CoA hydratase/isomerase family. In the central section; belongs to the 3-hydroxyacyl-CoA dehydrogenase family. As to quaternary structure, heterotetramer of two alpha chains (FadJ) and two beta chains (FadI).

It localises to the cytoplasm. It carries out the reaction a (3S)-3-hydroxyacyl-CoA = a (2E)-enoyl-CoA + H2O. The enzyme catalyses a 4-saturated-(3S)-3-hydroxyacyl-CoA = a (3E)-enoyl-CoA + H2O. The catalysed reaction is a (3S)-3-hydroxyacyl-CoA + NAD(+) = a 3-oxoacyl-CoA + NADH + H(+). It catalyses the reaction (3S)-3-hydroxybutanoyl-CoA = (3R)-3-hydroxybutanoyl-CoA. Its pathway is lipid metabolism; fatty acid beta-oxidation. In terms of biological role, catalyzes the formation of a hydroxyacyl-CoA by addition of water on enoyl-CoA. Also exhibits 3-hydroxyacyl-CoA epimerase and 3-hydroxyacyl-CoA dehydrogenase activities. This Salmonella newport (strain SL254) protein is Fatty acid oxidation complex subunit alpha.